A 65-amino-acid chain; its full sequence is Large ribosomal subunit protein bL35 (65 aa).

Residues Met1 to Ile22 are disordered.

This sequence belongs to the bacterial ribosomal protein bL35 family.

This is Large ribosomal subunit protein bL35 from Flavobacterium psychrophilum (strain ATCC 49511 / DSM 21280 / CIP 103535 / JIP02/86).